Consider the following 139-residue polypeptide: Small ribosomal subunit protein uS11 (139 aa).

Disordered stretches follow at residues 1–33 (MPPAKKGPATSARKGQKTRRREKKNVPHGAAHI) and 118–139 (GAISDVTPQPHNGVRPPKRRRV). A compositionally biased stretch (basic residues) spans 14-23 (KGQKTRRREK).

This sequence belongs to the universal ribosomal protein uS11 family. Part of the 30S ribosomal subunit. Interacts with proteins S7 and S18. Binds to IF-3.

Functionally, located on the platform of the 30S subunit, it bridges several disparate RNA helices of the 16S rRNA. Forms part of the Shine-Dalgarno cleft in the 70S ribosome. The polypeptide is Small ribosomal subunit protein uS11 (Mycobacterium tuberculosis (strain ATCC 25177 / H37Ra)).